We begin with the raw amino-acid sequence, 249 residues long: Diaminopimelate epimerase (249 aa).

N11 and N60 together coordinate substrate. The active-site Proton donor is C69. Substrate is bound by residues 70-71 (GN), N164, and 182-183 (ER). C192 (proton acceptor) is an active-site residue. Position 193-194 (193-194 (GT)) interacts with substrate.

It belongs to the diaminopimelate epimerase family. As to quaternary structure, homodimer.

The protein localises to the cytoplasm. The catalysed reaction is (2S,6S)-2,6-diaminopimelate = meso-2,6-diaminopimelate. The protein operates within amino-acid biosynthesis; L-lysine biosynthesis via DAP pathway; DL-2,6-diaminopimelate from LL-2,6-diaminopimelate: step 1/1. In terms of biological role, catalyzes the stereoinversion of LL-2,6-diaminopimelate (L,L-DAP) to meso-diaminopimelate (meso-DAP), a precursor of L-lysine and an essential component of the bacterial peptidoglycan. The sequence is that of Diaminopimelate epimerase from Campylobacter jejuni subsp. jejuni serotype O:23/36 (strain 81-176).